A 104-amino-acid polypeptide reads, in one-letter code: Flagellar hook-basal body complex protein FliE (104 aa).

It belongs to the FliE family.

It localises to the bacterial flagellum basal body. This Escherichia coli (strain SE11) protein is Flagellar hook-basal body complex protein FliE.